The chain runs to 551 residues: Solute carrier family 22 member 3 (551 aa).

A helical transmembrane segment spans residues 21 to 41 (VFLLLCLTGVTFAFLFVGVVF). N-linked (GlcNAc...) asparagine glycans are attached at residues N72, N99, and N114. A helical membrane pass occupies residues 177-197 (LIIYLISCFGVGITGVVVAFA). An N-linked (GlcNAc...) asparagine glycan is attached at N199. The next 2 membrane-spanning stretches (helical) occupy residues 236 to 256 (IVGI…PGIA) and 264 to 284 (GIQL…WVVP). Residues 284–288 (PESPR) carry the Proline-rich sequence motif. Residue N317 is glycosylated (N-linked (GlcNAc...) asparagine). 3 helical membrane-spanning segments follow: residues 376-396 (IDFF…LLTI), 464-484 (GVSL…FLLF), and 493-513 (LPLI…MLLP).

The protein belongs to the major facilitator (TC 2.A.1) superfamily. Organic cation transporter (TC 2.A.1.19) family. In terms of tissue distribution, highly expressed in placenta. Highly expressed in kidney cortex. In kidney, expressed specifically in the proximal and distal convoluted tubules and within Bowman capsule. Expressed in brain, particularly in dopaminergic neurons of the substantia nigra compacta, non-aminergic neurons of the ventral tegmental area, substantia nigra reticulata, locus coeruleus, hippocampus and cortex. In brain, also detected in astrocytes in the substantia nigra reticulata, several hypothalamic nuclei and nigrostriatal region. Expressed in neurons and glial cells of amygdala.

It is found in the cell membrane. The protein localises to the apical cell membrane. Its subcellular location is the basolateral cell membrane. The protein resides in the mitochondrion membrane. It localises to the endomembrane system. It is found in the nucleus membrane. The protein localises to the nucleus outer membrane. It carries out the reaction (R)-noradrenaline(out) = (R)-noradrenaline(in). It catalyses the reaction (R)-adrenaline(out) = (R)-adrenaline(in). The catalysed reaction is serotonin(out) = serotonin(in). The enzyme catalyses dopamine(out) = dopamine(in). It carries out the reaction histamine(out) = histamine(in). It catalyses the reaction tyramine(in) = tyramine(out). The catalysed reaction is guanidine(out) = guanidine(in). The enzyme catalyses agmatine(out) = agmatine(in). It carries out the reaction spermidine(in) = spermidine(out). It catalyses the reaction L-histidyl-L-proline diketopiperazine(in) = L-histidyl-L-proline diketopiperazine(out). The catalysed reaction is (R)-salsolinol(in) = (R)-salsolinol(out). Its function is as follows. Electrogenic voltage-dependent transporter that mediates the transport of a variety of organic cations such as endogenous bioactive amines, cationic drugs and xenobiotics. Cation cellular uptake or release is driven by the electrochemical potential, i.e. membrane potential and concentration gradient. Functions as a Na(+)- and Cl(-)-independent, bidirectional uniporter. Implicated in monoamine neurotransmitters uptake such as dopamine, adrenaline/epinephrine, noradrenaline/norepinephrine, homovanillic acid, histamine, serotonin and tyramine, thereby supporting a role in homeostatic regulation of aminergic neurotransmission in the brain. Transports dopaminergic neuromodulators cyclo(his-pro) and salsolinol with low efficiency. May be involved in the uptake and disposition of cationic compounds by renal clearance from the blood flow. May contribute to regulate the transport of cationic compounds in testis across the blood-testis-barrier. Mediates the transport of polyamine spermidine and putrescine. Mediates the bidirectional transport of polyamine agmatine. Also transports guanidine. May also mediate intracellular transport of organic cations, thereby playing a role in amine metabolism and intracellular signaling. This Mus musculus (Mouse) protein is Solute carrier family 22 member 3.